We begin with the raw amino-acid sequence, 500 residues long: L-arabinose isomerase (500 aa).

Positions 306, 333, 349, and 448 each coordinate Mn(2+).

Belongs to the arabinose isomerase family. Mn(2+) serves as cofactor.

The catalysed reaction is beta-L-arabinopyranose = L-ribulose. Its pathway is carbohydrate degradation; L-arabinose degradation via L-ribulose; D-xylulose 5-phosphate from L-arabinose (bacterial route): step 1/3. Functionally, catalyzes the conversion of L-arabinose to L-ribulose. The polypeptide is L-arabinose isomerase (Shewanella sp. (strain MR-7)).